The primary structure comprises 740 residues: Phosphoribosylformylglycinamidine synthase subunit PurL (740 aa).

Residue histidine 53 is part of the active site. Tyrosine 56 and lysine 95 together coordinate ATP. Glutamate 97 provides a ligand contact to Mg(2+). Substrate-binding positions include 98-101 (SHNH) and arginine 120. Residue histidine 99 is the Proton acceptor of the active site. Aspartate 121 is a Mg(2+) binding site. Glutamine 244 contributes to the substrate binding site. Aspartate 274 lines the Mg(2+) pocket. Residue 318 to 320 (ESQ) coordinates substrate. The ATP site is built by aspartate 501 and glycine 538. Residue asparagine 539 coordinates Mg(2+). Serine 541 contributes to the substrate binding site.

It belongs to the FGAMS family. As to quaternary structure, monomer. Part of the FGAM synthase complex composed of 1 PurL, 1 PurQ and 2 PurS subunits.

Its subcellular location is the cytoplasm. The catalysed reaction is N(2)-formyl-N(1)-(5-phospho-beta-D-ribosyl)glycinamide + L-glutamine + ATP + H2O = 2-formamido-N(1)-(5-O-phospho-beta-D-ribosyl)acetamidine + L-glutamate + ADP + phosphate + H(+). It participates in purine metabolism; IMP biosynthesis via de novo pathway; 5-amino-1-(5-phospho-D-ribosyl)imidazole from N(2)-formyl-N(1)-(5-phospho-D-ribosyl)glycinamide: step 1/2. In terms of biological role, part of the phosphoribosylformylglycinamidine synthase complex involved in the purines biosynthetic pathway. Catalyzes the ATP-dependent conversion of formylglycinamide ribonucleotide (FGAR) and glutamine to yield formylglycinamidine ribonucleotide (FGAM) and glutamate. The FGAM synthase complex is composed of three subunits. PurQ produces an ammonia molecule by converting glutamine to glutamate. PurL transfers the ammonia molecule to FGAR to form FGAM in an ATP-dependent manner. PurS interacts with PurQ and PurL and is thought to assist in the transfer of the ammonia molecule from PurQ to PurL. This chain is Phosphoribosylformylglycinamidine synthase subunit PurL, found in Lactobacillus delbrueckii subsp. bulgaricus (strain ATCC 11842 / DSM 20081 / BCRC 10696 / JCM 1002 / NBRC 13953 / NCIMB 11778 / NCTC 12712 / WDCM 00102 / Lb 14).